Reading from the N-terminus, the 626-residue chain is Janus kinase and microtubule-interacting protein 1 (626 aa).

Positions methionine 1–glutamate 25 are disordered. Residues methionine 1–valine 365 form a mediates association with microtubules region. Coiled-coil stretches lie at residues glutamate 13–arginine 255 and glutamate 284–serine 413. Residues valine 365 to valine 626 are mediates interaction with TYK2 and GABBR1. Serine 382 carries the phosphoserine modification. Residues glutamate 452–threonine 461 show a composition bias toward polar residues. The interval glutamate 452 to arginine 481 is disordered. Threonine 470 is modified (phosphothreonine). Positions glutamine 490–arginine 604 form a coiled coil.

This sequence belongs to the JAKMIP family. In terms of assembly, homodimer. Interacts with JAK1 and TYK2. Forms a complex with GABBR1 and KIF5B/kinesin-1. Post-translationally, phosphorylated. In terms of tissue distribution, specifically expressed in brain and testis by spermatogonia, spermatocytes, spermatozoa and Sertoli cells (at protein level).

The protein localises to the cytoplasm. The protein resides in the cytoskeleton. Its subcellular location is the membrane. In terms of biological role, associates with microtubules and may play a role in the microtubule-dependent transport of the GABA-B receptor. May play a role in JAK1 signaling and regulate microtubule cytoskeleton rearrangements. In Rattus norvegicus (Rat), this protein is Janus kinase and microtubule-interacting protein 1 (Jakmip1).